The chain runs to 210 residues: Large ribosomal subunit protein uL4 (210 aa).

Residues 41 to 52 (QTNARQGTASTK) are compositionally biased toward polar residues. Residues 41–71 (QTNARQGTASTKTRAEVRGGGRKPWRQKGTG) are disordered. Positions 60 to 71 (GGRKPWRQKGTG) are enriched in basic residues.

It belongs to the universal ribosomal protein uL4 family. As to quaternary structure, part of the 50S ribosomal subunit.

Functionally, one of the primary rRNA binding proteins, this protein initially binds near the 5'-end of the 23S rRNA. It is important during the early stages of 50S assembly. It makes multiple contacts with different domains of the 23S rRNA in the assembled 50S subunit and ribosome. Its function is as follows. Forms part of the polypeptide exit tunnel. This chain is Large ribosomal subunit protein uL4, found in Nostoc sp. (strain PCC 7120 / SAG 25.82 / UTEX 2576).